The chain runs to 452 residues: Prenyltransferase fsdK (452 aa).

Belongs to the tryptophan dimethylallyltransferase family.

Its pathway is mycotoxin biosynthesis. Prenyltransferase; part of the gene cluster that mediates the biosynthesis of fusaridione A, a bright yellow trans-fused decalin-containing tetramic acid with antimicrobial activity. The PKS module of fsdS catalyzes the formation of the polyketide unit which is then conjugated to L-tyrosine by the condensation domain of the fsdS NRPS module. Activity of the Dieckmann cyclase domain (RED) results in release of the intermediate fusaridione A. The unstable pyrrolidinedione ring of fusaridione A is opened through a reverse-Dieckmann reaction to afford its ring-opened form. In Fusarium heterosporum, this protein is Prenyltransferase fsdK.